We begin with the raw amino-acid sequence, 301 residues long: Ornithine carbamoyltransferase (301 aa).

Carbamoyl phosphate-binding positions include 47-50 (STRT), Gln74, Arg98, and 125-128 (HPCQ). L-ornithine-binding positions include Asn156, Asp220, and 224-225 (SM). Carbamoyl phosphate is bound by residues 260-261 (CL) and Arg288.

This sequence belongs to the aspartate/ornithine carbamoyltransferase superfamily. OTCase family.

Its subcellular location is the cytoplasm. The enzyme catalyses carbamoyl phosphate + L-ornithine = L-citrulline + phosphate + H(+). Its pathway is amino-acid biosynthesis; L-arginine biosynthesis; L-arginine from L-ornithine and carbamoyl phosphate: step 1/3. Its function is as follows. Reversibly catalyzes the transfer of the carbamoyl group from carbamoyl phosphate (CP) to the N(epsilon) atom of ornithine (ORN) to produce L-citrulline. The polypeptide is Ornithine carbamoyltransferase (Methanobrevibacter smithii (strain ATCC 35061 / DSM 861 / OCM 144 / PS)).